A 208-amino-acid polypeptide reads, in one-letter code: Protein-L-isoaspartate O-methyltransferase (208 aa).

Ser59 is an active-site residue.

The protein belongs to the methyltransferase superfamily. L-isoaspartyl/D-aspartyl protein methyltransferase family. In terms of assembly, monomer.

Its subcellular location is the cytoplasm. It catalyses the reaction [protein]-L-isoaspartate + S-adenosyl-L-methionine = [protein]-L-isoaspartate alpha-methyl ester + S-adenosyl-L-homocysteine. Catalyzes the methyl esterification of L-isoaspartyl residues in peptides and proteins that result from spontaneous decomposition of normal L-aspartyl and L-asparaginyl residues. It plays a role in the repair and/or degradation of damaged proteins. The polypeptide is Protein-L-isoaspartate O-methyltransferase (pcm) (Shigella flexneri).